Here is a 201-residue protein sequence, read N- to C-terminus: ATP synthase subunit delta (201 aa).

This sequence belongs to the ATPase delta chain family. As to quaternary structure, F-type ATPases have 2 components, F(1) - the catalytic core - and F(0) - the membrane proton channel. F(1) has five subunits: alpha(3), beta(3), gamma(1), delta(1), epsilon(1). F(0) has three main subunits: a(1), b(2) and c(10-14). The alpha and beta chains form an alternating ring which encloses part of the gamma chain. F(1) is attached to F(0) by a central stalk formed by the gamma and epsilon chains, while a peripheral stalk is formed by the delta and b chains.

It is found in the cell inner membrane. Its function is as follows. F(1)F(0) ATP synthase produces ATP from ADP in the presence of a proton or sodium gradient. F-type ATPases consist of two structural domains, F(1) containing the extramembraneous catalytic core and F(0) containing the membrane proton channel, linked together by a central stalk and a peripheral stalk. During catalysis, ATP synthesis in the catalytic domain of F(1) is coupled via a rotary mechanism of the central stalk subunits to proton translocation. Functionally, this protein is part of the stalk that links CF(0) to CF(1). It either transmits conformational changes from CF(0) to CF(1) or is implicated in proton conduction. The protein is ATP synthase subunit delta of Xanthobacter autotrophicus (strain ATCC BAA-1158 / Py2).